Reading from the N-terminus, the 446-residue chain is Na(+)-translocating NADH-quinone reductase subunit A (446 aa).

It belongs to the NqrA family. Composed of six subunits; NqrA, NqrB, NqrC, NqrD, NqrE and NqrF.

It carries out the reaction a ubiquinone + n Na(+)(in) + NADH + H(+) = a ubiquinol + n Na(+)(out) + NAD(+). In terms of biological role, NQR complex catalyzes the reduction of ubiquinone-1 to ubiquinol by two successive reactions, coupled with the transport of Na(+) ions from the cytoplasm to the periplasm. NqrA to NqrE are probably involved in the second step, the conversion of ubisemiquinone to ubiquinol. The protein is Na(+)-translocating NADH-quinone reductase subunit A of Aliivibrio salmonicida (strain LFI1238) (Vibrio salmonicida (strain LFI1238)).